A 413-amino-acid polypeptide reads, in one-letter code: Serine protease inhibitor A3L (413 aa).

An N-terminal signal peptide occupies residues 1 to 28 (MAFIAALGLLMAGICPAVLCDGTLGRDT). Serine 30 carries the phosphoserine modification. Asparagine 102, asparagine 182, asparagine 220, and asparagine 267 each carry an N-linked (GlcNAc...) asparagine glycan. The tract at residues 365–389 (GTEATAATGVATVIRRQPRTLNFNR) is RCL.

Belongs to the serpin family. In terms of processing, N-glycosylated. As to expression, liver.

It localises to the secreted. In Rattus norvegicus (Rat), this protein is Serine protease inhibitor A3L (Serpina3l).